The primary structure comprises 215 residues: Adenylate kinase (215 aa).

10-15 (GAGKGT) serves as a coordination point for ATP. Residues 30-59 (STGDIFRANISGKTELGMKAKGYMDKGLLV) form an NMP region. Residues Thr31, Arg36, 57 to 59 (LLV), 85 to 88 (GFPR), and Gln92 contribute to the AMP site. Residues 126 to 163 (GRRVCSKCGASYHIEYNPTKVEGICDLCGSPVVQRKDD) are LID. Arg127 provides a ligand contact to ATP. Zn(2+) is bound by residues Cys130 and Cys133. 136 to 137 (SY) contacts ATP. The Zn(2+) site is built by Cys150 and Cys153. AMP-binding residues include Arg160 and Arg171. Gln199 provides a ligand contact to ATP.

The protein belongs to the adenylate kinase family. Monomer.

It is found in the cytoplasm. It carries out the reaction AMP + ATP = 2 ADP. Its pathway is purine metabolism; AMP biosynthesis via salvage pathway; AMP from ADP: step 1/1. Functionally, catalyzes the reversible transfer of the terminal phosphate group between ATP and AMP. Plays an important role in cellular energy homeostasis and in adenine nucleotide metabolism. The polypeptide is Adenylate kinase (Clostridium acetobutylicum (strain ATCC 824 / DSM 792 / JCM 1419 / IAM 19013 / LMG 5710 / NBRC 13948 / NRRL B-527 / VKM B-1787 / 2291 / W)).